The chain runs to 394 residues: Elongation factor Tu (394 aa).

Residues Lys-10 to Glu-204 enclose the tr-type G domain. The tract at residues Gly-19–Thr-26 is G1. Gly-19–Thr-26 is a GTP binding site. Residue Thr-26 coordinates Mg(2+). The segment at Gly-60–Asn-64 is G2. The G3 stretch occupies residues Asp-81–Gly-84. GTP is bound by residues Asp-81–His-85 and Asn-136–Asp-139. Residues Asn-136–Asp-139 are G4. The tract at residues Ser-174–Leu-176 is G5.

It belongs to the TRAFAC class translation factor GTPase superfamily. Classic translation factor GTPase family. EF-Tu/EF-1A subfamily. As to quaternary structure, monomer.

Its subcellular location is the cytoplasm. It carries out the reaction GTP + H2O = GDP + phosphate + H(+). GTP hydrolase that promotes the GTP-dependent binding of aminoacyl-tRNA to the A-site of ribosomes during protein biosynthesis. The protein is Elongation factor Tu of Neisseria gonorrhoeae.